The primary structure comprises 229 residues: Heptaprenylglyceryl phosphate synthase (229 aa).

K12 serves as a coordination point for sn-glycerol 1-phosphate. Mg(2+)-binding residues include D14 and T40. Residues 159 to 164 (YIEYSG), G189, and 209 to 210 (GN) each bind sn-glycerol 1-phosphate.

The protein belongs to the GGGP/HepGP synthase family. Group I subfamily. In terms of assembly, homodimer. Requires Mg(2+) as cofactor.

The enzyme catalyses sn-glycerol 1-phosphate + all-trans-heptaprenyl diphosphate = 3-heptaprenyl-sn-glycero-1-phosphate + diphosphate. Its pathway is membrane lipid metabolism; glycerophospholipid metabolism. Its function is as follows. Prenyltransferase that catalyzes in vivo the transfer of the heptaprenyl moiety of heptaprenyl pyrophosphate (HepPP; 35 carbon atoms) to the C3 hydroxyl of sn-glycerol-1-phosphate (G1P), producing heptaprenylglyceryl phosphate (HepGP). This reaction is an ether-bond-formation step in the biosynthesis of archaea-type G1P-based membrane lipids found in Bacillales. In Oceanobacillus iheyensis (strain DSM 14371 / CIP 107618 / JCM 11309 / KCTC 3954 / HTE831), this protein is Heptaprenylglyceryl phosphate synthase.